The sequence spans 213 residues: Orotate phosphoribosyltransferase (213 aa).

5-phospho-alpha-D-ribose 1-diphosphate is bound at residue K26. Residue 34–35 (FF) coordinates orotate. Residues 72-73 (YK), R99, K100, K103, H105, and 124-132 (DDVITAGTA) contribute to the 5-phospho-alpha-D-ribose 1-diphosphate site. 2 residues coordinate orotate: T128 and R156.

This sequence belongs to the purine/pyrimidine phosphoribosyltransferase family. PyrE subfamily. As to quaternary structure, homodimer. It depends on Mg(2+) as a cofactor.

The enzyme catalyses orotidine 5'-phosphate + diphosphate = orotate + 5-phospho-alpha-D-ribose 1-diphosphate. The protein operates within pyrimidine metabolism; UMP biosynthesis via de novo pathway; UMP from orotate: step 1/2. Its function is as follows. Catalyzes the transfer of a ribosyl phosphate group from 5-phosphoribose 1-diphosphate to orotate, leading to the formation of orotidine monophosphate (OMP). The sequence is that of Orotate phosphoribosyltransferase from Pseudomonas aeruginosa (strain UCBPP-PA14).